Consider the following 96-residue polypeptide: Acylphosphatase (96 aa).

Positions 9–96 (CAEIYVSGRV…DTFTDFFIKR (88 aa)) constitute an Acylphosphatase-like domain. Catalysis depends on residues Arg24 and Asn42.

Belongs to the acylphosphatase family.

It catalyses the reaction an acyl phosphate + H2O = a carboxylate + phosphate + H(+). The chain is Acylphosphatase (acyP) from Methanococcoides burtonii (strain DSM 6242 / NBRC 107633 / OCM 468 / ACE-M).